Consider the following 608-residue polypeptide: Epsin-3 (608 aa).

The a 1,2-diacyl-sn-glycero-3-phospho-(1D-myo-inositol-4,5-bisphosphate) site is built by Arg-8, Lys-11, Arg-25, Asn-30, Arg-63, and His-73. The region spanning 12-144 is the ENTH domain; that stretch reads NIVHNYSEAE…KDEERLRQER (133 aa). 2 disordered regions span residues 150–266 and 281–475; these read TKER…QSSI and STHC…GPSA. Positions 174 to 189 are enriched in low complexity; the sequence is GSPSSYTSASSSPRYA. Ser-184 and Ser-185 each carry phosphoserine. One can recognise a UIM domain in the interval 202 to 221; that stretch reads EEELQLQLALAMSREEAEKG. Basic and acidic residues-rich tracts occupy residues 214–229 and 240–260; these read SREE…KGDD and GQRR…EKLK. 7 tandem repeats follow at residues 287-289, 310-312, 337-339, 353-355, 370-372, 495-497, and 508-510. The interval 287-372 is 5 X 3 AA repeats of [DE]-P-W; that stretch reads DPWDIPGLRP…KLPSTGVDPW (86 aa). The segment covering 346-363 has biased composition (pro residues); sequence PSGPPITDPWAPSSPTPK. The tract at residues 495–607 is 3 X 3 AA repeats of N-P-F; sequence NPFLTGLSAP…LPPQAGTNPF (113 aa). Disordered regions lie at residues 498–530 and 575–608; these read LTGL…SPAL and GAFA…NPFL. A compositionally biased stretch (pro residues) spans 578–588; the sequence is APPPASLPQPL. Copy 3 of the repeat occupies 605-607; it reads NPF.

The protein belongs to the epsin family.

Its subcellular location is the cytoplasm. It is found in the cell cortex. The protein localises to the perinuclear region. The protein resides in the cytoplasmic vesicle. It localises to the clathrin-coated vesicle. Its subcellular location is the nucleus. In Rattus norvegicus (Rat), this protein is Epsin-3 (Epn3).